Here is a 431-residue protein sequence, read N- to C-terminus: Adenylosuccinate synthetase (431 aa).

Residues Gly-13–Lys-19 and Gly-41–Thr-43 contribute to the GTP site. The Proton acceptor role is filled by Asp-14. 2 residues coordinate Mg(2+): Asp-14 and Gly-41. Residues Asp-14–Lys-17, Asn-39–His-42, Thr-130, Arg-144, Gln-225, Thr-240, and Arg-304 each bind IMP. His-42 acts as the Proton donor in catalysis. Ser-300–Arg-306 contributes to the substrate binding site. GTP contacts are provided by residues Arg-306, Lys-332–Asp-334, and Ser-414–Gly-416.

The protein belongs to the adenylosuccinate synthetase family. In terms of assembly, homodimer. It depends on Mg(2+) as a cofactor.

Its subcellular location is the cytoplasm. The enzyme catalyses IMP + L-aspartate + GTP = N(6)-(1,2-dicarboxyethyl)-AMP + GDP + phosphate + 2 H(+). Its pathway is purine metabolism; AMP biosynthesis via de novo pathway; AMP from IMP: step 1/2. Functionally, plays an important role in the de novo pathway of purine nucleotide biosynthesis. Catalyzes the first committed step in the biosynthesis of AMP from IMP. This Bordetella avium (strain 197N) protein is Adenylosuccinate synthetase.